A 233-amino-acid chain; its full sequence is Octanoyltransferase (233 aa).

Residues 32 to 213 (NNIDGILLLL…NFKMIFETDL (182 aa)) enclose the BPL/LPL catalytic domain. Substrate is bound by residues 77-84 (RGGNVTYH), 144-146 (AIG), and 157-159 (GFA). The active-site Acyl-thioester intermediate is Cys-175.

The protein belongs to the LipB family.

It is found in the cytoplasm. It catalyses the reaction octanoyl-[ACP] + L-lysyl-[protein] = N(6)-octanoyl-L-lysyl-[protein] + holo-[ACP] + H(+). It functions in the pathway protein modification; protein lipoylation via endogenous pathway; protein N(6)-(lipoyl)lysine from octanoyl-[acyl-carrier-protein]: step 1/2. Functionally, catalyzes the transfer of endogenously produced octanoic acid from octanoyl-acyl-carrier-protein onto the lipoyl domains of lipoate-dependent enzymes. Lipoyl-ACP can also act as a substrate although octanoyl-ACP is likely to be the physiological substrate. The sequence is that of Octanoyltransferase from Clostridium kluyveri (strain ATCC 8527 / DSM 555 / NBRC 12016 / NCIMB 10680 / K1).